The chain runs to 96 residues: Aspartyl/glutamyl-tRNA(Asn/Gln) amidotransferase subunit C (96 aa).

The protein belongs to the GatC family. In terms of assembly, heterotrimer of A, B and C subunits.

It catalyses the reaction L-glutamyl-tRNA(Gln) + L-glutamine + ATP + H2O = L-glutaminyl-tRNA(Gln) + L-glutamate + ADP + phosphate + H(+). It carries out the reaction L-aspartyl-tRNA(Asn) + L-glutamine + ATP + H2O = L-asparaginyl-tRNA(Asn) + L-glutamate + ADP + phosphate + 2 H(+). Its function is as follows. Allows the formation of correctly charged Asn-tRNA(Asn) or Gln-tRNA(Gln) through the transamidation of misacylated Asp-tRNA(Asn) or Glu-tRNA(Gln) in organisms which lack either or both of asparaginyl-tRNA or glutaminyl-tRNA synthetases. The reaction takes place in the presence of glutamine and ATP through an activated phospho-Asp-tRNA(Asn) or phospho-Glu-tRNA(Gln). The protein is Aspartyl/glutamyl-tRNA(Asn/Gln) amidotransferase subunit C of Symbiobacterium thermophilum (strain DSM 24528 / JCM 14929 / IAM 14863 / T).